The primary structure comprises 458 residues: D-inositol 3-phosphate glycosyltransferase (458 aa).

Residues 1–29 (MRADRPGHRSRGINPGPGMFTLVGPDERD) are disordered. H47 provides a ligand contact to 1D-myo-inositol 3-phosphate. UDP-N-acetyl-alpha-D-glucosamine-binding positions include 53 to 54 (QP) and G61. 1D-myo-inositol 3-phosphate is bound by residues 58 to 63 (DAGGMN), K116, Y149, T173, and R193. UDP-N-acetyl-alpha-D-glucosamine is bound by residues R267, K272, and V339. Position 351 (A351) interacts with Mg(2+). UDP-N-acetyl-alpha-D-glucosamine is bound by residues E361 and E369. T375 lines the Mg(2+) pocket.

The protein belongs to the glycosyltransferase group 1 family. MshA subfamily. In terms of assembly, homodimer.

The enzyme catalyses 1D-myo-inositol 3-phosphate + UDP-N-acetyl-alpha-D-glucosamine = 1D-myo-inositol 2-acetamido-2-deoxy-alpha-D-glucopyranoside 3-phosphate + UDP + H(+). Its function is as follows. Catalyzes the transfer of a N-acetyl-glucosamine moiety to 1D-myo-inositol 3-phosphate to produce 1D-myo-inositol 2-acetamido-2-deoxy-glucopyranoside 3-phosphate in the mycothiol biosynthesis pathway. The sequence is that of D-inositol 3-phosphate glycosyltransferase from Nocardioides sp. (strain ATCC BAA-499 / JS614).